The sequence spans 451 residues: Bifunctional protein GlmU (451 aa).

Residues 1–217 are pyrophosphorylase; sequence MKTLILAAGL…IDEVTGVNDR (217 aa). Residues 6–9, lysine 20, glutamine 68, 73–74, 95–97, glycine 134, glutamate 146, asparagine 161, and asparagine 215 each bind UDP-N-acetyl-alpha-D-glucosamine; these read LAAG, GT, and YGD. Mg(2+) is bound at residue aspartate 97. Asparagine 215 contacts Mg(2+). The tract at residues 218–238 is linker; the sequence is IQLSKLEKNMRKRINEKLMRE. Positions 239 to 451 are N-acetyltransferase; sequence GVRIIDPESV…GGNQNADSKE (213 aa). Residues arginine 320 and lysine 338 each coordinate UDP-N-acetyl-alpha-D-glucosamine. Histidine 350 acts as the Proton acceptor in catalysis. UDP-N-acetyl-alpha-D-glucosamine-binding residues include tyrosine 353 and asparagine 364. Acetyl-CoA is bound by residues alanine 367, 373–374, serine 392, alanine 410, and arginine 427; that span reads NY.

It in the N-terminal section; belongs to the N-acetylglucosamine-1-phosphate uridyltransferase family. This sequence in the C-terminal section; belongs to the transferase hexapeptide repeat family. In terms of assembly, homotrimer. It depends on Mg(2+) as a cofactor.

The protein localises to the cytoplasm. The catalysed reaction is alpha-D-glucosamine 1-phosphate + acetyl-CoA = N-acetyl-alpha-D-glucosamine 1-phosphate + CoA + H(+). It catalyses the reaction N-acetyl-alpha-D-glucosamine 1-phosphate + UTP + H(+) = UDP-N-acetyl-alpha-D-glucosamine + diphosphate. It participates in nucleotide-sugar biosynthesis; UDP-N-acetyl-alpha-D-glucosamine biosynthesis; N-acetyl-alpha-D-glucosamine 1-phosphate from alpha-D-glucosamine 6-phosphate (route II): step 2/2. The protein operates within nucleotide-sugar biosynthesis; UDP-N-acetyl-alpha-D-glucosamine biosynthesis; UDP-N-acetyl-alpha-D-glucosamine from N-acetyl-alpha-D-glucosamine 1-phosphate: step 1/1. Its pathway is bacterial outer membrane biogenesis; LPS lipid A biosynthesis. Its function is as follows. Catalyzes the last two sequential reactions in the de novo biosynthetic pathway for UDP-N-acetylglucosamine (UDP-GlcNAc). The C-terminal domain catalyzes the transfer of acetyl group from acetyl coenzyme A to glucosamine-1-phosphate (GlcN-1-P) to produce N-acetylglucosamine-1-phosphate (GlcNAc-1-P), which is converted into UDP-GlcNAc by the transfer of uridine 5-monophosphate (from uridine 5-triphosphate), a reaction catalyzed by the N-terminal domain. The chain is Bifunctional protein GlmU from Thermosipho africanus (strain TCF52B).